Here is a 67-residue protein sequence, read N- to C-terminus: Small ribosomal subunit protein eS17 (67 aa).

Belongs to the eukaryotic ribosomal protein eS17 family. In terms of assembly, part of the 30S ribosomal subunit.

The protein is Small ribosomal subunit protein eS17 of Thermococcus kodakarensis (strain ATCC BAA-918 / JCM 12380 / KOD1) (Pyrococcus kodakaraensis (strain KOD1)).